The following is a 250-amino-acid chain: Probable aquaporin TIP-type RB7-18C (250 aa).

2 consecutive transmembrane segments (helical) span residues 20 to 42 (AYVAEFIATLLFVFAGVGSAIAY) and 55 to 77 (GLVAVAVAHAFALFVGVSIAANI). Positions 83-85 (NPA) match the NPA 1 motif. The next 3 helical transmembrane spans lie at 97–119 (TILTGFFYWIAQLLGSTVACLLL), 140–162 (FQGVVMEIIITFALVYTVYATAA), and 172–194 (IAPIAIGFIVGANILAAGPFSGG). The NPA 2 motif lies at 197-199 (NPA). Residues 215-237 (WIYWAGPLIGGGLAGFIYGDVFI) traverse the membrane as a helical segment.

The protein belongs to the MIP/aquaporin (TC 1.A.8) family. TIP (TC 1.A.8.10) subfamily. Roots.

It localises to the vacuole membrane. Its function is as follows. Channel protein in tonoplast. These proteins may allow the diffusion of amino acids and/or peptides from the vacuolar compartment to the cytoplasm. The sequence is that of Probable aquaporin TIP-type RB7-18C from Nicotiana tabacum (Common tobacco).